Here is a 264-residue protein sequence, read N- to C-terminus: Thymidylate synthase (264 aa).

Arg-21 contacts dUMP. His-51 provides a ligand contact to (6R)-5,10-methylene-5,6,7,8-tetrahydrofolate. DUMP is bound at residue Arg-126–Arg-127. Catalysis depends on Cys-146, which acts as the Nucleophile. DUMP contacts are provided by residues Arg-166–Asp-169, Asn-177, and His-207–Tyr-209. Residue Asp-169 participates in (6R)-5,10-methylene-5,6,7,8-tetrahydrofolate binding. Ala-263 is a binding site for (6R)-5,10-methylene-5,6,7,8-tetrahydrofolate.

The protein belongs to the thymidylate synthase family. Bacterial-type ThyA subfamily. In terms of assembly, homodimer.

It localises to the cytoplasm. It catalyses the reaction dUMP + (6R)-5,10-methylene-5,6,7,8-tetrahydrofolate = 7,8-dihydrofolate + dTMP. Its pathway is pyrimidine metabolism; dTTP biosynthesis. Its function is as follows. Catalyzes the reductive methylation of 2'-deoxyuridine-5'-monophosphate (dUMP) to 2'-deoxythymidine-5'-monophosphate (dTMP) while utilizing 5,10-methylenetetrahydrofolate (mTHF) as the methyl donor and reductant in the reaction, yielding dihydrofolate (DHF) as a by-product. This enzymatic reaction provides an intracellular de novo source of dTMP, an essential precursor for DNA biosynthesis. In Hahella chejuensis (strain KCTC 2396), this protein is Thymidylate synthase.